Here is a 323-residue protein sequence, read N- to C-terminus: Lipid A biosynthesis acyltransferase 1 (323 aa).

A helical transmembrane segment spans residues 23-43 (YWGAWLGVAAMAGIALTPPKF). The short motif at 139 to 144 (HGWAVD) is the HXXXXD motif element.

Belongs to the LpxL/LpxM/LpxP family. LpxM subfamily.

The protein localises to the cell inner membrane. The enzyme catalyses an alpha-Kdo-(2-&gt;4)-alpha-Kdo-(2-&gt;6)-(acyl)-lipid IVA + a fatty acyl-[ACP] = an alpha-Kdo-(2-&gt;4)-alpha-Kdo-(2-&gt;6)-lipid A + holo-[ACP]. It participates in glycolipid biosynthesis; KDO(2)-lipid A biosynthesis; KDO(2)-lipid A from CMP-3-deoxy-D-manno-octulosonate and lipid IV(A): step 4/4. The protein operates within bacterial outer membrane biogenesis; lipopolysaccharide biosynthesis. Catalyzes the transfer of an acyl chain from an acyl-[acyl-carrier-protein] (ACP) to a Kdo(2)-(acyl)-lipid IV(A) to form a Kdo(2)-lipid A. This Shigella flexneri protein is Lipid A biosynthesis acyltransferase 1.